Reading from the N-terminus, the 506-residue chain is Aluminum-activated malate transporter 7 (506 aa).

The next 6 helical transmembrane spans lie at 28 to 48 (VGLVLALVSSFYYYQPLYDSF), 52 to 72 (AMWAVMTVVVVFEFSVGATLG), 78 to 98 (VAATLFAGGLGIGAHHLASMS), 104 to 124 (PILLAVFVFVQAALSTFVRFF), 130 to 150 (RYDYSLLIFILTFALISVSGF), and 166 to 186 (VIIGGLSCVIISIFVCPVWAG). The disordered stretch occupies residues 461-485 (DDGNNDDTSKNDNGSKEVSIHEKHE). Positions 467 to 485 (DTSKNDNGSKEVSIHEKHE) are enriched in basic and acidic residues.

It belongs to the aromatic acid exporter (TC 2.A.85) family.

Its subcellular location is the membrane. In terms of biological role, malate transporter. The chain is Aluminum-activated malate transporter 7 (ALMT7) from Arabidopsis thaliana (Mouse-ear cress).